Consider the following 145-residue polypeptide: MRLLGLDVGSKTVGVAESDPLGWTAQAVEIIPIDEEAEVFGLERVAELVKSRQVAGFVLGLPKNMNNTEGPRVEAARHYGELLEERFGLPIDYQDERLTTVQAHRMLVEEADVSRRKQKKVIDELAATLILQNYLDCHGKLCAKL.

This sequence belongs to the YqgF nuclease family.

It is found in the cytoplasm. Its function is as follows. Could be a nuclease involved in processing of the 5'-end of pre-16S rRNA. In Limosilactobacillus fermentum (strain NBRC 3956 / LMG 18251) (Lactobacillus fermentum), this protein is Putative pre-16S rRNA nuclease.